The chain runs to 321 residues: NADH-ubiquinone oxidoreductase chain 1 (321 aa).

8 consecutive transmembrane segments (helical) span residues isoleucine 6–leucine 26, leucine 67–alanine 87, leucine 103–glycine 123, isoleucine 143–phenylalanine 163, proline 174–alanine 194, alanine 220–leucine 240, alanine 256–valine 276, and phenylalanine 296–glycine 316.

This sequence belongs to the complex I subunit 1 family.

Its subcellular location is the mitochondrion inner membrane. The enzyme catalyses a ubiquinone + NADH + 5 H(+)(in) = a ubiquinol + NAD(+) + 4 H(+)(out). Core subunit of the mitochondrial membrane respiratory chain NADH dehydrogenase (Complex I) that is believed to belong to the minimal assembly required for catalysis. Complex I functions in the transfer of electrons from NADH to the respiratory chain. The immediate electron acceptor for the enzyme is believed to be ubiquinone. The polypeptide is NADH-ubiquinone oxidoreductase chain 1 (MT-ND1) (Alligator mississippiensis (American alligator)).